The sequence spans 245 residues: Phosphoadenosine 5'-phosphosulfate reductase (245 aa).

Cys-239 functions as the Nucleophile; cysteine thiosulfonate intermediate in the catalytic mechanism.

It belongs to the PAPS reductase family. CysH subfamily.

The protein localises to the cytoplasm. The enzyme catalyses [thioredoxin]-disulfide + sulfite + adenosine 3',5'-bisphosphate + 2 H(+) = [thioredoxin]-dithiol + 3'-phosphoadenylyl sulfate. Its pathway is sulfur metabolism; hydrogen sulfide biosynthesis; sulfite from sulfate: step 3/3. In terms of biological role, catalyzes the formation of sulfite from phosphoadenosine 5'-phosphosulfate (PAPS) using thioredoxin as an electron donor. The chain is Phosphoadenosine 5'-phosphosulfate reductase from Baumannia cicadellinicola subsp. Homalodisca coagulata.